Here is a 752-residue protein sequence, read N- to C-terminus: Catalase-peroxidase (752 aa).

The interval 1-20 (MENELVSKVKAPVPGNQTNT) is disordered. The tryptophyl-tyrosyl-methioninium (Trp-Tyr) (with M-260) cross-link spans 111 to 234 (WHSAGTYRIG…LGAVQMGLIY (124 aa)). Histidine 112 serves as the catalytic Proton acceptor. Positions 234–260 (YVNPEGPNGKPDPAAAAVDIRETFARM) form a cross-link, tryptophyl-tyrosyl-methioninium (Tyr-Met) (with W-111). Histidine 275 lines the heme b pocket.

Belongs to the peroxidase family. Peroxidase/catalase subfamily. Homodimer or homotetramer. Requires heme b as cofactor. In terms of processing, formation of the three residue Trp-Tyr-Met cross-link is important for the catalase, but not the peroxidase activity of the enzyme.

It carries out the reaction H2O2 + AH2 = A + 2 H2O. The enzyme catalyses 2 H2O2 = O2 + 2 H2O. Functionally, bifunctional enzyme with both catalase and broad-spectrum peroxidase activity. This chain is Catalase-peroxidase, found in Koribacter versatilis (strain Ellin345).